Here is a 145-residue protein sequence, read N- to C-terminus: MAHSLRKTRKLRGHVSHGHGRIGKHRKHPGGRGNAGGQHHHRINRDKYHPGYFGKVGMRVFHLNKNHHYCPTVNVDRLWALVPEEQKTKVSAEKAPVIDCVKAGYFKVLGKGLLPKQPLIVKAKFFSHEAENKIKAAGGACILVA.

Positions 1–30 (MAHSLRKTRKLRGHVSHGHGRIGKHRKHPG) are enriched in basic residues. The disordered stretch occupies residues 1–48 (MAHSLRKTRKLRGHVSHGHGRIGKHRKHPGGRGNAGGQHHHRINRDKY).

It belongs to the universal ribosomal protein uL15 family. Component of the large ribosomal subunit.

The protein resides in the cytoplasm. It is found in the cytosol. It localises to the rough endoplasmic reticulum. Its function is as follows. Component of the large ribosomal subunit. The protein is Large ribosomal subunit protein uL15 (rpl-27a) of Oscheius tipulae.